The chain runs to 552 residues: Hyaluronan synthase 2 (552 aa).

The Cytoplasmic portion of the chain corresponds to 1–11 (MHCERFLCILR). Residues 12–32 (IIGTTLFGVSLLLGITAAYIV) form a helical membrane-spanning segment. The Extracellular segment spans residues 33–45 (GYQFIQTDNYYFS). A helical membrane pass occupies residues 46-66 (FGLYGAFLASHLIIQSLFAFL). Over 67–374 (EHRKMKKSLE…NAMWFHKHHL (308 aa)) the chain is Cytoplasmic. Phosphothreonine is present on threonine 110. Lysine 190 is covalently cross-linked (Glycyl lysine isopeptide (Lys-Gly) (interchain with G-Cter in ubiquitin)). The O-linked (GlcNAc) serine glycan is linked to serine 221. Threonine 328 is modified (phosphothreonine). A helical membrane pass occupies residues 375 to 395 (WMTYEAIITGFFPFFLIATVI). Residues 396 to 402 (QLFYRGK) lie on the Extracellular side of the membrane. A helical transmembrane segment spans residues 403-423 (IWNILLFLLTVQLVGLIKSSF). At 424-429 (ASCLRG) the chain is on the cytoplasmic side. A helical transmembrane segment spans residues 430–450 (NIVMVFMSLYSVLYMSSLLPA). Topologically, residues 451–475 (KMFAIATINKAGWGTSGRKTIVVNF) are extracellular. The helical transmembrane segment at 476 to 496 (IGLIPVSVWFTILLGGVIFTI) threads the bilayer. Over 497–510 (YKESKRPFSESKQT) the chain is Cytoplasmic. The chain crosses the membrane as a helical span at residues 511–531 (VLIVGTLLYACYWVMLLTLYV). Topologically, residues 532–552 (VLINKCGRRKKGQQYDMVLDV) are extracellular.

The protein belongs to the NodC/HAS family. As to quaternary structure, homodimer; dimerization promotes enzymatic activity. Forms heterodimer with HAS3. Forms heterodimer with HAS1. It depends on Mg(2+) as a cofactor. Post-translationally, phosphorylation at Thr-328 is essential for hyaluronan synthase activity. Phosphorylation at Thr-110 is required for transport from ER to Golgi. O-GlcNAcylation at Ser-221 increases the stability of HAS2 and plasma membrane localization. In terms of processing, ubiquitination at Lys-190; this ubiquitination is essential for hyaluronan synthase activity and homo- or hetero-oligomerization. Can also be poly-ubiquitinated. Deubiquitinated by USP17 and USP4. USP17 efficiently removes 'Lys-63'- and 'Lys-48'-linked polyubiquitin chains, whereas USP4 preferentially removes monoubiquitination and, partially, both 'Lys-63'- and 'Lys-48'-linked polyubiquitin chain. Expressed in fibroblasts.

The protein resides in the cell membrane. Its subcellular location is the endoplasmic reticulum membrane. The protein localises to the vesicle. It is found in the golgi apparatus membrane. It localises to the lysosome. The enzyme catalyses [hyaluronan](n) + UDP-N-acetyl-alpha-D-glucosamine = N-acetyl-beta-D-glucosaminyl-(1-&gt;4)-[hyaluronan](n) + UDP + H(+). The catalysed reaction is N-acetyl-beta-D-glucosaminyl-(1-&gt;4)-[hyaluronan](n) + UDP-alpha-D-glucuronate = [hyaluronan](n+1) + UDP + H(+). It participates in glycan biosynthesis; hyaluronan biosynthesis. Regulated by several post-translational modifications such as ubiquitination/deubiquitination, phosphorylation and O-GlcNAcylation. The enzymatic activity depends on the availability of UDP-GlcUA and UDP-GlcNAc. Its function is as follows. Catalyzes the addition of GlcNAc or GlcUA monosaccharides to the nascent hyaluronan polymer. Therefore, it is essential to hyaluronan synthesis a major component of most extracellular matrices that has a structural role in tissues architectures and regulates cell adhesion, migration and differentiation. This is one of three isoenzymes responsible for cellular hyaluronan synthesis and it is particularly responsible for the synthesis of high molecular mass hyaluronan. The polypeptide is Hyaluronan synthase 2 (Homo sapiens (Human)).